Reading from the N-terminus, the 565-residue chain is Urease subunit beta (565 aa).

The Urease domain maps to 130 to 565 (GGIDTHIHFI…LALARKYFMI (436 aa)). Ni(2+) contacts are provided by His-135, His-137, and Lys-218. Lys-218 carries the N6-carboxylysine modification. His-220 serves as a coordination point for substrate. Residues His-247 and His-273 each contribute to the Ni(2+) site. Residue His-321 is the Proton donor of the active site. Asp-361 contributes to the Ni(2+) binding site.

It belongs to the metallo-dependent hydrolases superfamily. Urease alpha subunit family. As to quaternary structure, heterohexamer of 3 UreA (alpha) and 3 UreB (beta) subunits. Requires Ni cation as cofactor. Post-translationally, carboxylation allows a single lysine to coordinate two nickel ions.

Its subcellular location is the cytoplasm. It catalyses the reaction urea + 2 H2O + H(+) = hydrogencarbonate + 2 NH4(+). It functions in the pathway nitrogen metabolism; urea degradation; CO(2) and NH(3) from urea (urease route): step 1/1. This is Urease subunit beta from Campylobacter lari.